The primary structure comprises 186 residues: Ribosome-recycling factor (186 aa).

It belongs to the RRF family.

It localises to the cytoplasm. Responsible for the release of ribosomes from messenger RNA at the termination of protein biosynthesis. May increase the efficiency of translation by recycling ribosomes from one round of translation to another. The polypeptide is Ribosome-recycling factor (Amoebophilus asiaticus (strain 5a2)).